We begin with the raw amino-acid sequence, 365 residues long: Probable L-tyrosine/L-aspartate decarboxylase (365 aa).

N6-(pyridoxal phosphate)lysine is present on Lys-225.

Belongs to the group II decarboxylase family. MfnA subfamily. Requires pyridoxal 5'-phosphate as cofactor.

The catalysed reaction is L-tyrosine + H(+) = tyramine + CO2. The enzyme catalyses L-aspartate + H(+) = beta-alanine + CO2. The protein operates within cofactor biosynthesis; methanofuran biosynthesis. It participates in cofactor biosynthesis; coenzyme A biosynthesis. Functionally, catalyzes the decarboxylation of L-tyrosine to produce tyramine for methanofuran biosynthesis. Can also catalyze the decarboxylation of L-aspartate to produce beta-alanine for coenzyme A (CoA) biosynthesis. In Methanocorpusculum labreanum (strain ATCC 43576 / DSM 4855 / Z), this protein is Probable L-tyrosine/L-aspartate decarboxylase.